Reading from the N-terminus, the 220-residue chain is Riboflavin kinase (220 aa).

An H-T-H motif-like region spans residues Met1–Asn92. The interval Val93–Thr220 is riboflavin kinase. Gly102 to Arg107 is a CDP binding site. The Mg(2+) site is built by Thr131 and Asn133. FMN-binding residues include Thr188 and Glu195. Lys200–Arg203 contacts CDP.

Belongs to the archaeal riboflavin kinase family. It depends on Mg(2+) as a cofactor.

It carries out the reaction riboflavin + CTP = CDP + FMN + H(+). Its pathway is cofactor biosynthesis; FMN biosynthesis; FMN from riboflavin (CTP route): step 1/1. Catalyzes the CTP-dependent phosphorylation of riboflavin (vitamin B2) to form flavin mononucleotide (FMN). The chain is Riboflavin kinase (ribK) from Thermoplasma acidophilum (strain ATCC 25905 / DSM 1728 / JCM 9062 / NBRC 15155 / AMRC-C165).